A 316-amino-acid polypeptide reads, in one-letter code: GTP cyclohydrolase FolE2 1 (316 aa).

The protein belongs to the GTP cyclohydrolase IV family.

It carries out the reaction GTP + H2O = 7,8-dihydroneopterin 3'-triphosphate + formate + H(+). It functions in the pathway cofactor biosynthesis; 7,8-dihydroneopterin triphosphate biosynthesis; 7,8-dihydroneopterin triphosphate from GTP: step 1/1. In terms of biological role, converts GTP to 7,8-dihydroneopterin triphosphate. The chain is GTP cyclohydrolase FolE2 1 from Burkholderia orbicola (strain AU 1054).